A 1279-amino-acid chain; its full sequence is Mediator of DNA damage checkpoint protein 1 (1279 aa).

Residues 1–22 form a disordered region; the sequence is MENTQVIDWDAEEEEETEISSG. Residues 1–150 are interaction with CHEK2; that stretch reads MENTQVIDWD…PRSLLTIEKT (150 aa). An interaction with the MRN complex region spans residues 2–222; sequence ENTQVIDWDA…SSPFGLGSDT (221 aa). Residue T4 is modified to Phosphothreonine. The segment covering 9–18 has biased composition (acidic residues); that stretch reads WDAEEEEETE. The 52-residue stretch at 54 to 105 folds into the FHA domain; it reads NVVGRSPDCSVALPFPSISKQHAVIEISAWNKAPILQDCGSLNGTQIVKPPR. T146 carries the phosphothreonine modification. Disordered regions lie at residues 156–394, 409–634, and 714–744; these read RSQN…EEVS, LWSG…KHAK, and ETSE…PVPT. Phosphoserine is present on residues S168 and S176. The span at 179–192 shows a compositional bias: polar residues; the sequence is SVANGSRNTASPSA. 2 positions are modified to phosphoserine: S198 and S220. T222 carries the post-translational modification Phosphothreonine. The segment covering 264-277 has biased composition (basic and acidic residues); it reads TKDKFKDTKMKEEA. Residues 278–292 show a composition bias toward low complexity; sequence GSAGVPVGSVVEGSP. S298 is modified (phosphoserine). At T300 the chain carries Phosphothreonine. Position 314 is a phosphoserine (S314). Residue T316 is modified to Phosphothreonine. S350 and S354 each carry phosphoserine. Phosphothreonine is present on T356. Phosphoserine is present on residues S372 and S380. The segment covering 381-393 has biased composition (acidic residues); sequence DTDEEERGEEEEV. Residue T382 is modified to Phosphothreonine. Residues S394, S411, S421, S434, and S438 each carry the phosphoserine modification. Positions 421–435 are enriched in polar residues; that stretch reads SQPQVLVERSQSASG. T440 is subject to Phosphothreonine. S457 is modified (phosphoserine). Position 466 is a phosphothreonine (T466). Phosphoserine occurs at positions 488, 489, 550, 587, and 589. Residues 545–561 are compositionally biased toward polar residues; sequence QEGSSSPVADIRMSQQP. The span at 620-634 shows a compositional bias: basic and acidic residues; the sequence is GREREAHVGGTKHAK. 2 positions are modified to phosphoserine: S730 and S745. K764 is modified (N6-acetyllysine). Residues 772-1086 are disordered; it reads QMMPDGKASG…TKPNQEAAAP (315 aa). S793, S801, and S824 each carry phosphoserine. A compositionally biased stretch (low complexity) spans 798–817; that stretch reads ASASPQSLLTSQSQKQSTPQ. Composition is skewed to polar residues over residues 862-889, 901-929, and 942-956; these read TCPT…STRT, QPST…TSVN, and PLTS…NLNP. At T889 the chain carries Phosphothreonine. At T951 the chain carries Phosphothreonine. Residue K991 forms a Glycyl lysine isopeptide (Lys-Gly) (interchain with G-Cter in SUMO2) linkage. Residues 994 to 1014 show a composition bias toward low complexity; it reads STPAEPEPQSSASQSSGASEA. Phosphoserine occurs at positions 1008, 1009, 1012, and 1016. Residues 1032–1047 are compositionally biased toward basic and acidic residues; that stretch reads VVKEEDPGEIQVKEEP. K1034 is covalently cross-linked (Glycyl lysine isopeptide (Lys-Gly) (interchain with G-Cter in SUMO1); alternate). K1034 is covalently cross-linked (Glycyl lysine isopeptide (Lys-Gly) (interchain with G-Cter in SUMO2); alternate). T1054 carries the post-translational modification Phosphothreonine. 2 BRCT domains span residues 1085–1163 and 1184–1275; these read APKV…DYLV and RERR…FVLS.

As to quaternary structure, homodimer. Interacts with H2AX, which requires phosphorylation of H2AX on 'Ser-139'. Interacts with the MRN complex, composed of MRE11, RAD50, and NBN. Interacts with CHEK2, which requires ATM-mediated phosphorylation of 'Thr-68' within the FHA domain of CHEK2. Interacts constitutively with the BRCA1-BARD1 complex, SMC1A and TP53BP1. Interacts with ATM and FANCD2, and these interactions are reduced upon DNA damage. Also interacts with the PRKDC complex, composed of XRCC6/KU70, XRCC5/KU80 and PRKDC/XRCC7. This interaction may be required for PRKDC autophosphorylation, which is essential for DNA double strand break (DSB) repair. When phosphorylated by ATM, interacts with RNF8 (via FHA domain). Interacts with CEP164. When phosphorylated, interacts with APTX (via FHA-like domain). Interacts (when phosphorylated) with TOPBP1; promoting TOPBP1 localization to DNA damage sites during mitosis. Interacts (when phosphorylated) with NBN; promoting NBN and MRN complex localization to DNA damage sites. Phosphorylated upon exposure to ionizing radiation (IR), ultraviolet radiation (UV), and hydroxyurea (HU). Phosphorylation in response to IR requires ATM, NBN, and possibly CHEK2. Also phosphorylated during the G2/M phase of the cell cycle and during activation of the mitotic spindle checkpoint. Phosphorylation at Thr-4 by ATM stabilizes and enhances homodimerization via the FHA domain. Phosphorylated at Ser-168 and Ser-198 by CK2 in response to DNA damage during mitosis, promoting interaction with TOPBP1. Phosphorylated by CK2 in response to DNA damage, promoting interaction with NBN and recruitment of the MRN complex to DNA damage sites. Post-translationally, sumoylation at Lys-1034 by PIAS4 following DNA damage promotes ubiquitin-mediated degradation. In terms of processing, ubiquitinated by RNF4, leading to proteasomal degradation; undergoes 'Lys-48'-linked polyubiquitination.

It localises to the nucleus. Its subcellular location is the chromosome. In terms of biological role, histone reader protein required for checkpoint-mediated cell cycle arrest in response to DNA damage within both the S phase and G2/M phases of the cell cycle. Specifically recognizes and binds histone H2AX phosphorylated at 'Ser-139', a marker of DNA damage, serving as a scaffold for the recruitment of DNA repair and signal transduction proteins to discrete foci of DNA damage sites. Also required for downstream events subsequent to the recruitment of these proteins. These include phosphorylation and activation of the ATM, CHEK1 and CHEK2 kinases, and stabilization of TP53/p53 and apoptosis. ATM and CHEK2 may also be activated independently by a parallel pathway mediated by TP53BP1. Required for chromosomal stability during mitosis by promoting recruitment of TOPBP1 to DNA double strand breaks (DSBs): TOPBP1 forms filamentous assemblies that bridge MDC1 and tether broken chromosomes during mitosis. Required for the repair of DSBs via homologous recombination by promoting recruitment of NBN component of the MRN complex to DSBs. The protein is Mediator of DNA damage checkpoint protein 1 (Mdc1) of Rattus norvegicus (Rat).